The chain runs to 386 residues: Alanine racemase 1 (386 aa).

The active-site Proton acceptor; specific for D-alanine is the lysine 38. Position 38 is an N6-(pyridoxal phosphate)lysine (lysine 38). Arginine 136 serves as a coordination point for substrate. Tyrosine 267 acts as the Proton acceptor; specific for L-alanine in catalysis. Methionine 315 contributes to the substrate binding site.

This sequence belongs to the alanine racemase family. Requires pyridoxal 5'-phosphate as cofactor.

The enzyme catalyses L-alanine = D-alanine. It functions in the pathway amino-acid biosynthesis; D-alanine biosynthesis; D-alanine from L-alanine: step 1/1. Functionally, catalyzes the interconversion of L-alanine and D-alanine. May also act on other amino acids. The sequence is that of Alanine racemase 1 (alr1) from Clostridium acetobutylicum (strain ATCC 824 / DSM 792 / JCM 1419 / IAM 19013 / LMG 5710 / NBRC 13948 / NRRL B-527 / VKM B-1787 / 2291 / W).